The following is a 461-amino-acid chain: Elongation factor 1-alpha (461 aa).

A tr-type G domain is found at lysine 5–threonine 242. Residues glycine 14–serine 21 are G1. Glycine 14 to serine 21 is a GTP binding site. Residues glycine 70–aspartate 74 are G2. Positions aspartate 91–glycine 94 are G3. Residues aspartate 91–histidine 95 and asparagine 153–aspartate 156 each bind GTP. Residues asparagine 153–aspartate 156 form a G4 region. Residues serine 194–tryptophan 196 are G5. 5-glutamyl glycerylphosphorylethanolamine occurs at positions 301 and 374.

The protein belongs to the TRAFAC class translation factor GTPase superfamily. Classic translation factor GTPase family. EF-Tu/EF-1A subfamily.

It localises to the cytoplasm. Functionally, this protein promotes the GTP-dependent binding of aminoacyl-tRNA to the A-site of ribosomes during protein biosynthesis. This Apis mellifera (Honeybee) protein is Elongation factor 1-alpha.